The sequence spans 294 residues: 4-hydroxy-tetrahydrodipicolinate synthase (294 aa).

Thr-46 serves as a coordination point for pyruvate. The Proton donor/acceptor role is filled by Tyr-134. The active-site Schiff-base intermediate with substrate is Lys-163. Ile-205 is a binding site for pyruvate.

Belongs to the DapA family. In terms of assembly, homotetramer; dimer of dimers.

It is found in the cytoplasm. It catalyses the reaction L-aspartate 4-semialdehyde + pyruvate = (2S,4S)-4-hydroxy-2,3,4,5-tetrahydrodipicolinate + H2O + H(+). Its pathway is amino-acid biosynthesis; L-lysine biosynthesis via DAP pathway; (S)-tetrahydrodipicolinate from L-aspartate: step 3/4. Catalyzes the condensation of (S)-aspartate-beta-semialdehyde [(S)-ASA] and pyruvate to 4-hydroxy-tetrahydrodipicolinate (HTPA). In Clostridium tetani (strain Massachusetts / E88), this protein is 4-hydroxy-tetrahydrodipicolinate synthase.